Consider the following 291-residue polypeptide: Putative butyrophilin-like protein 10 pseudogene (291 aa).

Positions 1–26 are cleaved as a signal peptide; the sequence is MAVTCDPEAFLSICFVTLVFLQLPLA. Residues 27–146 form the Ig-like V-type domain; that stretch reads SIWKADFDVT…GEATVQVQVA (120 aa). At 27-254 the chain is on the extracellular side; that stretch reads SIWKADFDVT…RSSQFTAWKA (228 aa). Cys-54 and Cys-128 are oxidised to a cystine. Asn-59 carries N-linked (GlcNAc...) asparagine glycosylation. The helical transmembrane segment at 255-275 threads the bilayer; the sequence is ALPLILVAMGLVIAGGICIFW. The Cytoplasmic segment spans residues 276 to 291; it reads KRQREKNKASLEEERE.

Belongs to the immunoglobulin superfamily. BTN/MOG family.

It is found in the membrane. The protein is Putative butyrophilin-like protein 10 pseudogene of Homo sapiens (Human).